The sequence spans 193 residues: uncharacterized protein (193 aa).

Residues Met1–Gly22 form the signal peptide. A lipid anchor (N-palmitoyl cysteine) is attached at Cys23. A lipid anchor (S-diacylglycerol cysteine) is attached at Cys23.

The protein resides in the cell membrane. This is an uncharacterized protein from Escherichia coli (strain K12).